We begin with the raw amino-acid sequence, 260 residues long: 3-methyl-2-oxobutanoate hydroxymethyltransferase (260 aa).

Mg(2+) contacts are provided by D44 and D83. 3-methyl-2-oxobutanoate-binding positions include 44–45 (DS), D83, and K113. A Mg(2+)-binding site is contributed by E115. E182 serves as the catalytic Proton acceptor.

Belongs to the PanB family. As to quaternary structure, homodecamer; pentamer of dimers. Mg(2+) is required as a cofactor.

The protein localises to the cytoplasm. It carries out the reaction 3-methyl-2-oxobutanoate + (6R)-5,10-methylene-5,6,7,8-tetrahydrofolate + H2O = 2-dehydropantoate + (6S)-5,6,7,8-tetrahydrofolate. The protein operates within cofactor biosynthesis; (R)-pantothenate biosynthesis; (R)-pantoate from 3-methyl-2-oxobutanoate: step 1/2. Its function is as follows. Catalyzes the reversible reaction in which hydroxymethyl group from 5,10-methylenetetrahydrofolate is transferred onto alpha-ketoisovalerate to form ketopantoate. This Synechocystis sp. (strain ATCC 27184 / PCC 6803 / Kazusa) protein is 3-methyl-2-oxobutanoate hydroxymethyltransferase.